The primary structure comprises 878 residues: Alanine--tRNA ligase (878 aa).

Zn(2+) is bound by residues His570, His574, Cys672, and His676. A disordered region spans residues 844-864; the sequence is GGKGGGGRPDMAQAGGPDASA. Positions 855-864 are enriched in low complexity; it reads AQAGGPDASA.

It belongs to the class-II aminoacyl-tRNA synthetase family. The cofactor is Zn(2+).

Its subcellular location is the cytoplasm. The enzyme catalyses tRNA(Ala) + L-alanine + ATP = L-alanyl-tRNA(Ala) + AMP + diphosphate. In terms of biological role, catalyzes the attachment of alanine to tRNA(Ala) in a two-step reaction: alanine is first activated by ATP to form Ala-AMP and then transferred to the acceptor end of tRNA(Ala). Also edits incorrectly charged Ser-tRNA(Ala) and Gly-tRNA(Ala) via its editing domain. The sequence is that of Alanine--tRNA ligase from Paramagnetospirillum magneticum (strain ATCC 700264 / AMB-1) (Magnetospirillum magneticum).